Consider the following 151-residue polypeptide: D-aminoacyl-tRNA deacylase (151 aa).

The Gly-cisPro motif, important for rejection of L-amino acids motif lies at 136-137; sequence GP.

It belongs to the DTD family. As to quaternary structure, homodimer.

It localises to the cytoplasm. It catalyses the reaction glycyl-tRNA(Ala) + H2O = tRNA(Ala) + glycine + H(+). It carries out the reaction a D-aminoacyl-tRNA + H2O = a tRNA + a D-alpha-amino acid + H(+). Its function is as follows. An aminoacyl-tRNA editing enzyme that deacylates mischarged D-aminoacyl-tRNAs. Also deacylates mischarged glycyl-tRNA(Ala), protecting cells against glycine mischarging by AlaRS. Acts via tRNA-based rather than protein-based catalysis; rejects L-amino acids rather than detecting D-amino acids in the active site. By recycling D-aminoacyl-tRNA to D-amino acids and free tRNA molecules, this enzyme counteracts the toxicity associated with the formation of D-aminoacyl-tRNA entities in vivo and helps enforce protein L-homochirality. The polypeptide is D-aminoacyl-tRNA deacylase (Streptococcus gordonii (strain Challis / ATCC 35105 / BCRC 15272 / CH1 / DL1 / V288)).